A 299-amino-acid chain; its full sequence is Non-homologous end-joining factor 1 (299 aa).

The globular head stretch occupies residues 1–135; it reads MEELEQGLLM…ASPSLVSQHL (135 aa). The stretch at 128 to 170 forms a coiled coil; sequence PSLVSQHLIRPLMGMSLALQCQVRELATLLHMKDLEIQDYQES. Phosphoserine; by PRKDC is present on residues Ser-132, Ser-203, Ser-245, and Ser-251. Residues 224 to 288 are C-terminal tail; sequence QEVQVGQKHQ…GPLQRPQLSK (65 aa). Polar residues predominate over residues 255–266; sequence NQPEQLVSSAPT. The segment at 255–299 is disordered; it reads NQPEQLVSSAPTLSAPEKESTGTSGPLQRPQLSKVKRKKPRGLFS. Ser-263 is modified (phosphoserine). Thr-266 carries the post-translational modification Phosphothreonine. Ser-287 bears the Phosphoserine mark. Residues 288 to 299 show a composition bias toward basic residues; that stretch reads KVKRKKPRGLFS. An XLM motif is present at residues 289-299; sequence VKRKKPRGLFS.

The protein belongs to the XRCC4-XLF family. XLF subfamily. Homodimer; mainly exists as a homodimer when not associated with XRCC4. Interacts with XRCC4; the interaction is direct and is mediated via a head-to-head interaction between N-terminal head regions. Component of the core long-range non-homologous end joining (NHEJ) complex (also named DNA-PK complex) composed of PRKDC, LIG4, XRCC4, XRCC6/Ku70, XRCC5/Ku86 and NHEJ1/XLF. Additional component of the NHEJ complex includes PAXX. Following autophosphorylation, PRKDC dissociates from DNA, leading to formation of the short-range NHEJ complex, composed of LIG4, XRCC4, XRCC6/Ku70, XRCC5/Ku86 and NHEJ1/XLF. Interacts with POLL (DNA polymerase lambda); promoting POLL recruitment to double-strand breaks (DSBs) and stimulation of the end-filling activity of POLL. In terms of processing, phosphorylated by PRKDC at the C-terminus in response to DNA damage. Phosphorylations by PRKDC at the C-terminus of XRCC4 and NHEJ1/XLF are highly redundant and regulate ability of the XRCC4-NHEJ1/XLF subcomplex to bridge DNA. Phosphorylation does not prevent interaction with XRCC4 but disrupts ability to bridge DNA and promotes detachment from DNA. In terms of tissue distribution, ubiquitously expressed.

Its subcellular location is the nucleus. The protein localises to the chromosome. DNA repair protein involved in DNA non-homologous end joining (NHEJ); it is required for double-strand break (DSB) repair and V(D)J recombination and is also involved in telomere maintenance. Plays a key role in NHEJ by promoting the ligation of various mismatched and non-cohesive ends. Together with PAXX, collaborates with DNA polymerase lambda (POLL) to promote joining of non-cohesive DNA ends. May act in concert with XRCC5-XRCC6 (Ku) to stimulate XRCC4-mediated joining of blunt ends and several types of mismatched ends that are non-complementary or partially complementary. In some studies, has been shown to associate with XRCC4 to form alternating helical filaments that bridge DNA and act like a bandage, holding together the broken DNA until it is repaired. Alternatively, it has also been shown that rather than forming filaments, a single NHEJ1 dimer interacts through both head domains with XRCC4 to promote the close alignment of DNA ends. The XRCC4-NHEJ1/XLF subcomplex binds to the DNA fragments of a DSB in a highly diffusive manner and robustly bridges two independent DNA molecules, holding the broken DNA fragments in close proximity to one other. The mobility of the bridges ensures that the ends remain accessible for further processing by other repair factors. Binds DNA in a length-dependent manner. This is Non-homologous end-joining factor 1 from Homo sapiens (Human).